We begin with the raw amino-acid sequence, 452 residues long: Bifunctional protein GlmU (452 aa).

Positions 1-232 (MTTNAPGAVI…EADMQGVNSR (232 aa)) are pyrophosphorylase. UDP-N-acetyl-alpha-D-glucosamine contacts are provided by residues 11–14 (LAAG), K25, Q78, and 83–84 (GT). A Mg(2+)-binding site is contributed by D108. 3 residues coordinate UDP-N-acetyl-alpha-D-glucosamine: G144, E158, and N230. N230 is a binding site for Mg(2+). The linker stretch occupies residues 233–253 (ADLAAAEATMQQRLRMAAMAG). The N-acetyltransferase stretch occupies residues 254–452 (GVTMLDPSSV…HKDKKKASGE (199 aa)). The UDP-N-acetyl-alpha-D-glucosamine site is built by R319 and K337. The Proton acceptor role is filled by H349. Residues Y352 and N363 each contribute to the UDP-N-acetyl-alpha-D-glucosamine site. Acetyl-CoA is bound by residues A366, 372-373 (NY), S391, S409, and R426.

The protein in the N-terminal section; belongs to the N-acetylglucosamine-1-phosphate uridyltransferase family. In the C-terminal section; belongs to the transferase hexapeptide repeat family. In terms of assembly, homotrimer. The cofactor is Mg(2+).

The protein localises to the cytoplasm. It catalyses the reaction alpha-D-glucosamine 1-phosphate + acetyl-CoA = N-acetyl-alpha-D-glucosamine 1-phosphate + CoA + H(+). The enzyme catalyses N-acetyl-alpha-D-glucosamine 1-phosphate + UTP + H(+) = UDP-N-acetyl-alpha-D-glucosamine + diphosphate. The protein operates within nucleotide-sugar biosynthesis; UDP-N-acetyl-alpha-D-glucosamine biosynthesis; N-acetyl-alpha-D-glucosamine 1-phosphate from alpha-D-glucosamine 6-phosphate (route II): step 2/2. It functions in the pathway nucleotide-sugar biosynthesis; UDP-N-acetyl-alpha-D-glucosamine biosynthesis; UDP-N-acetyl-alpha-D-glucosamine from N-acetyl-alpha-D-glucosamine 1-phosphate: step 1/1. Its pathway is bacterial outer membrane biogenesis; LPS lipid A biosynthesis. Catalyzes the last two sequential reactions in the de novo biosynthetic pathway for UDP-N-acetylglucosamine (UDP-GlcNAc). The C-terminal domain catalyzes the transfer of acetyl group from acetyl coenzyme A to glucosamine-1-phosphate (GlcN-1-P) to produce N-acetylglucosamine-1-phosphate (GlcNAc-1-P), which is converted into UDP-GlcNAc by the transfer of uridine 5-monophosphate (from uridine 5-triphosphate), a reaction catalyzed by the N-terminal domain. The protein is Bifunctional protein GlmU of Parvibaculum lavamentivorans (strain DS-1 / DSM 13023 / NCIMB 13966).